The following is a 179-amino-acid chain: UPF0227 protein Sbal195_2522 (179 aa).

This sequence belongs to the UPF0227 family.

In Shewanella baltica (strain OS195), this protein is UPF0227 protein Sbal195_2522.